A 74-amino-acid chain; its full sequence is Guanine nucleotide-binding protein G(T) subunit gamma-T1 (74 aa).

Position 71 is a cysteine methyl ester (Cys-71). Residue Cys-71 is the site of S-farnesyl cysteine attachment. A propeptide spans 72–74 (VIS) (removed in mature form).

Belongs to the G protein gamma family. As to quaternary structure, g proteins are composed of 3 units, alpha, beta and gamma. In terms of tissue distribution, retinal rod outer segment.

The protein resides in the cell membrane. Guanine nucleotide-binding proteins (G proteins) are involved as a modulator or transducer in various transmembrane signaling systems. The beta and gamma chains are required for the GTPase activity, for replacement of GDP by GTP, and for G protein-effector interaction. This is Guanine nucleotide-binding protein G(T) subunit gamma-T1 (GNGT1) from Bos taurus (Bovine).